The following is an 888-amino-acid chain: CRISPR-associated endonuclease/helicase Cas3 (888 aa).

Residues lysine 20–leucine 231 form the HD Cas3-type domain. Mg(2+) contacts are provided by aspartate 75 and histidine 160. The 204-residue stretch at aspartate 301–proline 504 folds into the Helicase ATP-binding domain. Alanine 314–threonine 321 provides a ligand contact to ATP. The DEAH box signature appears at aspartate 452 to histidine 455. In terms of domain architecture, Helicase C-terminal spans methionine 556–tyrosine 735.

In the N-terminal section; belongs to the CRISPR-associated nuclease Cas3-HD family. This sequence in the central section; belongs to the CRISPR-associated helicase Cas3 family. As to quaternary structure, interacts with the CasA subunit of Cascade once Cascade has recognized target DNA. Requires Mg(2+) as cofactor.

Functionally, CRISPR (clustered regularly interspaced short palindromic repeat), is an adaptive immune system that provides protection against mobile genetic elements (viruses, transposable elements and conjugative plasmids). CRISPR clusters contain sequences complementary to antecedent mobile elements and target invading nucleic acids. CRISPR clusters are transcribed and processed into CRISPR RNA (crRNA). Cas3 plus Cascade participate in CRISPR interference, the third stage of CRISPR immunity. In terms of biological role, acts as an endonuclease, a 3'-5'exonuclease, and an ATP-dependent dsDNA helicase. Anneals and unwinds R-loops (in which crRNA binds the target DNA, displacing the noncomplementary strand). Unwinding requires ATP, annealing does not. Required along with the Cascade complex for resistance to bacteriophage lambda infection as well as the ability to cure CRISPR-encoding high-copy number plasmid. A Cas3-CasA fusion protein purified with the Cascade complex nicks target plasmid in the presence but not absence of Mg(2+), and degrades plasmid fully in the presence of Mg(2+) and ATP, suggesting the helicase activity is required for complete degradation. This is CRISPR-associated endonuclease/helicase Cas3 (ygcB) from Escherichia coli (strain K12).